An 89-amino-acid chain; its full sequence is Signal recognition particle 19 kDa protein (89 aa).

The protein belongs to the SRP19 family. As to quaternary structure, part of the signal recognition particle protein translocation system, which is composed of SRP and FtsY. Archaeal SRP consists of a 7S RNA molecule of 300 nucleotides and two protein subunits: SRP54 and SRP19.

The protein resides in the cytoplasm. Its function is as follows. Involved in targeting and insertion of nascent membrane proteins into the cytoplasmic membrane. Binds directly to 7S RNA and mediates binding of the 54 kDa subunit of the SRP. This Methanobrevibacter smithii (strain ATCC 35061 / DSM 861 / OCM 144 / PS) protein is Signal recognition particle 19 kDa protein.